A 132-amino-acid chain; its full sequence is Ribonuclease P protein component (132 aa).

This sequence belongs to the RnpA family. Consists of a catalytic RNA component (M1 or rnpB) and a protein subunit.

The enzyme catalyses Endonucleolytic cleavage of RNA, removing 5'-extranucleotides from tRNA precursor.. RNaseP catalyzes the removal of the 5'-leader sequence from pre-tRNA to produce the mature 5'-terminus. It can also cleave other RNA substrates such as 4.5S RNA. The protein component plays an auxiliary but essential role in vivo by binding to the 5'-leader sequence and broadening the substrate specificity of the ribozyme. The sequence is that of Ribonuclease P protein component from Marinomonas sp. (strain MWYL1).